The sequence spans 120 residues: UPF0102 protein PST_1070 (120 aa).

Belongs to the UPF0102 family.

The chain is UPF0102 protein PST_1070 from Stutzerimonas stutzeri (strain A1501) (Pseudomonas stutzeri).